The chain runs to 93 residues: Small ribosomal subunit protein uS19 (93 aa).

2 disordered regions span residues 1–25 and 74–93; these read MPRS…QNTK and FAPT…ARRR. Basic and acidic residues-rich tracts occupy residues 14–23 and 81–93; these read HLQKKVDDQN and RGHD…ARRR.

The protein belongs to the universal ribosomal protein uS19 family.

Protein S19 forms a complex with S13 that binds strongly to the 16S ribosomal RNA. The polypeptide is Small ribosomal subunit protein uS19 (Beutenbergia cavernae (strain ATCC BAA-8 / DSM 12333 / CCUG 43141 / JCM 11478 / NBRC 16432 / NCIMB 13614 / HKI 0122)).